A 474-amino-acid polypeptide reads, in one-letter code: Pyruvate kinase (474 aa).

R37 lines the substrate pocket. Residues N39, S41, and D71 each contribute to the K(+) site. 39–42 (NFSH) contacts ATP. The ATP site is built by R78 and K160. E222 is a binding site for Mg(2+). Substrate is bound by residues G245, D246, and T278. Residue D246 participates in Mg(2+) binding.

Belongs to the pyruvate kinase family. As to quaternary structure, homotetramer. The cofactor is Mg(2+). It depends on K(+) as a cofactor.

It carries out the reaction pyruvate + ATP = phosphoenolpyruvate + ADP + H(+). The protein operates within carbohydrate degradation; glycolysis; pyruvate from D-glyceraldehyde 3-phosphate: step 5/5. The polypeptide is Pyruvate kinase (ttuE) (Agrobacterium vitis (Rhizobium vitis)).